Here is a 364-residue protein sequence, read N- to C-terminus: tRNA N6-adenosine threonylcarbamoyltransferase (364 aa).

Positions 118 and 122 each coordinate Fe cation. Residues 140–144 (LVSGG), Asp173, Gly186, and Asn288 contribute to the substrate site. A Fe cation-binding site is contributed by Asp316.

This sequence belongs to the KAE1 / TsaD family. The cofactor is Fe(2+).

Its subcellular location is the cytoplasm. The catalysed reaction is L-threonylcarbamoyladenylate + adenosine(37) in tRNA = N(6)-L-threonylcarbamoyladenosine(37) in tRNA + AMP + H(+). In terms of biological role, required for the formation of a threonylcarbamoyl group on adenosine at position 37 (t(6)A37) in tRNAs that read codons beginning with adenine. Is involved in the transfer of the threonylcarbamoyl moiety of threonylcarbamoyl-AMP (TC-AMP) to the N6 group of A37, together with TsaE and TsaB. TsaD likely plays a direct catalytic role in this reaction. This Cereibacter sphaeroides (strain KD131 / KCTC 12085) (Rhodobacter sphaeroides) protein is tRNA N6-adenosine threonylcarbamoyltransferase.